A 344-amino-acid polypeptide reads, in one-letter code: Dihydroorotate dehydrogenase (quinone) (344 aa).

Residues 61–65 (AGLDK) and T85 each bind FMN. Substrate is bound at residue K65. 110 to 114 (NRMGF) is a substrate binding site. Residues N138 and N171 each contribute to the FMN site. N171 provides a ligand contact to substrate. S174 acts as the Nucleophile in catalysis. N176 lines the substrate pocket. FMN contacts are provided by K216 and T244. Residue 245-246 (NT) participates in substrate binding. FMN-binding positions include G267, G296, and 317–318 (YS).

This sequence belongs to the dihydroorotate dehydrogenase family. Type 2 subfamily. Monomer. FMN serves as cofactor.

Its subcellular location is the cell membrane. The enzyme catalyses (S)-dihydroorotate + a quinone = orotate + a quinol. It functions in the pathway pyrimidine metabolism; UMP biosynthesis via de novo pathway; orotate from (S)-dihydroorotate (quinone route): step 1/1. Functionally, catalyzes the conversion of dihydroorotate to orotate with quinone as electron acceptor. In Psychrobacter arcticus (strain DSM 17307 / VKM B-2377 / 273-4), this protein is Dihydroorotate dehydrogenase (quinone).